Reading from the N-terminus, the 181-residue chain is Large ribosomal subunit protein uL6 (181 aa).

This sequence belongs to the universal ribosomal protein uL6 family. Part of the 50S ribosomal subunit.

Its function is as follows. This protein binds to the 23S rRNA, and is important in its secondary structure. It is located near the subunit interface in the base of the L7/L12 stalk, and near the tRNA binding site of the peptidyltransferase center. In Synechococcus sp. (strain JA-3-3Ab) (Cyanobacteria bacterium Yellowstone A-Prime), this protein is Large ribosomal subunit protein uL6.